The chain runs to 292 residues: Ribose import binding protein RbsB (292 aa).

The signal sequence occupies residues 1-23; the sequence is MKKLTALTSAVLLGLAVSSSASA.

It belongs to the bacterial solute-binding protein 2 family. In terms of assembly, the complex is composed of an ATP-binding protein (RbsA), two transmembrane proteins (RbsC) and a solute-binding protein (RbsB).

Its subcellular location is the periplasm. Its function is as follows. Part of the ABC transporter complex RbsABC involved in ribose import. Binds ribose. The polypeptide is Ribose import binding protein RbsB (rbsB) (Haemophilus influenzae (strain ATCC 51907 / DSM 11121 / KW20 / Rd)).